Consider the following 190-residue polypeptide: Potassium-transporting ATPase KdpC subunit (190 aa).

Residues 10 to 30 form a helical membrane-spanning segment; it reads TFLFLLLITGGVYPLLTTALG.

It belongs to the KdpC family. In terms of assembly, the system is composed of three essential subunits: KdpA, KdpB and KdpC.

The protein localises to the cell inner membrane. Part of the high-affinity ATP-driven potassium transport (or Kdp) system, which catalyzes the hydrolysis of ATP coupled with the electrogenic transport of potassium into the cytoplasm. This subunit acts as a catalytic chaperone that increases the ATP-binding affinity of the ATP-hydrolyzing subunit KdpB by the formation of a transient KdpB/KdpC/ATP ternary complex. The polypeptide is Potassium-transporting ATPase KdpC subunit (Escherichia coli O127:H6 (strain E2348/69 / EPEC)).